The following is a 470-amino-acid chain: 3-isopropylmalate dehydratase large subunit (470 aa).

Positions 349, 409, and 412 each coordinate [4Fe-4S] cluster.

It belongs to the aconitase/IPM isomerase family. LeuC type 1 subfamily. As to quaternary structure, heterodimer of LeuC and LeuD. [4Fe-4S] cluster serves as cofactor.

The catalysed reaction is (2R,3S)-3-isopropylmalate = (2S)-2-isopropylmalate. It participates in amino-acid biosynthesis; L-leucine biosynthesis; L-leucine from 3-methyl-2-oxobutanoate: step 2/4. Functionally, catalyzes the isomerization between 2-isopropylmalate and 3-isopropylmalate, via the formation of 2-isopropylmaleate. The protein is 3-isopropylmalate dehydratase large subunit of Methylobacterium radiotolerans (strain ATCC 27329 / DSM 1819 / JCM 2831 / NBRC 15690 / NCIMB 10815 / 0-1).